Consider the following 225-residue polypeptide: Leucyl/phenylalanyl-tRNA--protein transferase (225 aa).

This sequence belongs to the L/F-transferase family.

It is found in the cytoplasm. The catalysed reaction is N-terminal L-lysyl-[protein] + L-leucyl-tRNA(Leu) = N-terminal L-leucyl-L-lysyl-[protein] + tRNA(Leu) + H(+). It catalyses the reaction N-terminal L-arginyl-[protein] + L-leucyl-tRNA(Leu) = N-terminal L-leucyl-L-arginyl-[protein] + tRNA(Leu) + H(+). The enzyme catalyses L-phenylalanyl-tRNA(Phe) + an N-terminal L-alpha-aminoacyl-[protein] = an N-terminal L-phenylalanyl-L-alpha-aminoacyl-[protein] + tRNA(Phe). In terms of biological role, functions in the N-end rule pathway of protein degradation where it conjugates Leu, Phe and, less efficiently, Met from aminoacyl-tRNAs to the N-termini of proteins containing an N-terminal arginine or lysine. This Gluconobacter oxydans (strain 621H) (Gluconobacter suboxydans) protein is Leucyl/phenylalanyl-tRNA--protein transferase.